A 291-amino-acid polypeptide reads, in one-letter code: Methionine aminopeptidase (291 aa).

His-118 contacts substrate. Residues Asp-135, Asp-146, and His-209 each contribute to the a divalent metal cation site. Residue His-216 participates in substrate binding. Glu-241 and Glu-273 together coordinate a divalent metal cation.

This sequence belongs to the peptidase M24A family. Methionine aminopeptidase type 1 subfamily. As to quaternary structure, monomer. It depends on Co(2+) as a cofactor. Zn(2+) is required as a cofactor. Mn(2+) serves as cofactor. The cofactor is Fe(2+).

The enzyme catalyses Release of N-terminal amino acids, preferentially methionine, from peptides and arylamides.. In terms of biological role, removes the N-terminal methionine from nascent proteins. The N-terminal methionine is often cleaved when the second residue in the primary sequence is small and uncharged (Met-Ala-, Cys, Gly, Pro, Ser, Thr, or Val). Requires deformylation of the N(alpha)-formylated initiator methionine before it can be hydrolyzed. The protein is Methionine aminopeptidase of Chlamydia trachomatis serovar D (strain ATCC VR-885 / DSM 19411 / UW-3/Cx).